Here is a 448-residue protein sequence, read N- to C-terminus: Phosphoglucosamine mutase (448 aa).

Serine 102 functions as the Phosphoserine intermediate in the catalytic mechanism. Mg(2+) contacts are provided by serine 102, aspartate 241, aspartate 243, and aspartate 245. Serine 102 is modified (phosphoserine).

It belongs to the phosphohexose mutase family. Mg(2+) serves as cofactor. In terms of processing, activated by phosphorylation.

It carries out the reaction alpha-D-glucosamine 1-phosphate = D-glucosamine 6-phosphate. Its function is as follows. Catalyzes the conversion of glucosamine-6-phosphate to glucosamine-1-phosphate. The protein is Phosphoglucosamine mutase of Ruegeria pomeroyi (strain ATCC 700808 / DSM 15171 / DSS-3) (Silicibacter pomeroyi).